A 535-amino-acid polypeptide reads, in one-letter code: Bifunctional purine biosynthesis protein PurH (535 aa).

One can recognise an MGS-like domain in the interval 6–151 (TRLPIRRALI…KNHKDVAIVV (146 aa)).

Belongs to the PurH family.

The catalysed reaction is (6R)-10-formyltetrahydrofolate + 5-amino-1-(5-phospho-beta-D-ribosyl)imidazole-4-carboxamide = 5-formamido-1-(5-phospho-D-ribosyl)imidazole-4-carboxamide + (6S)-5,6,7,8-tetrahydrofolate. It catalyses the reaction IMP + H2O = 5-formamido-1-(5-phospho-D-ribosyl)imidazole-4-carboxamide. Its pathway is purine metabolism; IMP biosynthesis via de novo pathway; 5-formamido-1-(5-phospho-D-ribosyl)imidazole-4-carboxamide from 5-amino-1-(5-phospho-D-ribosyl)imidazole-4-carboxamide (10-formyl THF route): step 1/1. It functions in the pathway purine metabolism; IMP biosynthesis via de novo pathway; IMP from 5-formamido-1-(5-phospho-D-ribosyl)imidazole-4-carboxamide: step 1/1. In Pseudomonas paraeruginosa (strain DSM 24068 / PA7) (Pseudomonas aeruginosa (strain PA7)), this protein is Bifunctional purine biosynthesis protein PurH.